A 437-amino-acid chain; its full sequence is Amino-acid acetyltransferase (437 aa).

The N-acetyltransferase domain maps to 289–437; sequence ECIRLATSFD…SKVLMLALDN (149 aa).

This sequence belongs to the acetyltransferase family. ArgA subfamily.

The protein resides in the cytoplasm. It carries out the reaction L-glutamate + acetyl-CoA = N-acetyl-L-glutamate + CoA + H(+). Its pathway is amino-acid biosynthesis; L-arginine biosynthesis; N(2)-acetyl-L-ornithine from L-glutamate: step 1/4. In Haemophilus ducreyi (strain 35000HP / ATCC 700724), this protein is Amino-acid acetyltransferase.